We begin with the raw amino-acid sequence, 62 residues long: Large ribosomal subunit protein bL28 (62 aa).

The disordered stretch occupies residues 1 to 28; that stretch reads MARKCVITGRKSRSGNSRSHAMNASKRT. Polar residues predominate over residues 14–26; it reads SGNSRSHAMNASK.

The protein belongs to the bacterial ribosomal protein bL28 family.

The chain is Large ribosomal subunit protein bL28 from Bacillus licheniformis (strain ATCC 14580 / DSM 13 / JCM 2505 / CCUG 7422 / NBRC 12200 / NCIMB 9375 / NCTC 10341 / NRRL NRS-1264 / Gibson 46).